Here is a 1260-residue protein sequence, read N- to C-terminus: Methionine synthase (1260 aa).

The region spanning 13–333 (FGIIRKILSE…DHIRAFCNAI (321 aa)) is the Hcy-binding domain. The Zn(2+) site is built by Cys-255, Cys-318, and Cys-319. The Pterin-binding domain occupies 364-625 (FVNVGERCNV…IPKDLLKLVE (262 aa)). The 95-residue stretch at 655 to 749 (EVEEWRNKPV…FMEEEKRLKR (95 aa)) folds into the B12-binding N-terminal domain. Methylcob(III)alamin-binding positions include Glu-699, 775–779 (GDVHD), His-778, Ser-823, Thr-827, and Ala-879. A B12-binding domain is found at 766-883 (GVVVLATVKG…VHVLDASRSV (118 aa)). The AdoMet activation domain occupies 916-1256 (SLKDRKYTSL…LSSILSYDRL (341 aa)). S-adenosyl-L-methionine is bound by residues Asp-966, Arg-1163, and 1218–1219 (YF).

Belongs to the vitamin-B12 dependent methionine synthase family. Methylcob(III)alamin serves as cofactor. It depends on Zn(2+) as a cofactor.

The catalysed reaction is (6S)-5-methyl-5,6,7,8-tetrahydrofolate + L-homocysteine = (6S)-5,6,7,8-tetrahydrofolate + L-methionine. It functions in the pathway amino-acid biosynthesis; L-methionine biosynthesis via de novo pathway; L-methionine from L-homocysteine (MetH route): step 1/1. Functionally, catalyzes the transfer of a methyl group from methyl-cobalamin to homocysteine, yielding enzyme-bound cob(I)alamin and methionine. Subsequently, remethylates the cofactor using methyltetrahydrofolate. This chain is Methionine synthase (mtr), found in Dictyostelium discoideum (Social amoeba).